The following is a 244-amino-acid chain: uncharacterized protein (244 aa).

The next 4 helical transmembrane spans lie at 20–42, 49–67, 82–101, and 108–125; these read TITAIAPIVMTFEPFFIFPVVLI, FVYILLPITAALILRATKV, TPSIAVFAVLLVATTIASVF, and AFLVAIVVISILHAATPI.

The protein localises to the cell membrane. This is an uncharacterized protein from Archaeoglobus fulgidus (strain ATCC 49558 / DSM 4304 / JCM 9628 / NBRC 100126 / VC-16).